The following is a 205-amino-acid chain: Ribosomal RNA small subunit methyltransferase G 1 (205 aa).

S-adenosyl-L-methionine contacts are provided by residues glycine 77, leucine 82, 100-102, 129-130, and arginine 138; these read EKS and LE.

Belongs to the methyltransferase superfamily. RNA methyltransferase RsmG family.

Its subcellular location is the cytoplasm. The enzyme catalyses guanosine(527) in 16S rRNA + S-adenosyl-L-methionine = N(7)-methylguanosine(527) in 16S rRNA + S-adenosyl-L-homocysteine. In terms of biological role, specifically methylates the N7 position of guanine in position 527 of 16S rRNA. In Bdellovibrio bacteriovorus (strain ATCC 15356 / DSM 50701 / NCIMB 9529 / HD100), this protein is Ribosomal RNA small subunit methyltransferase G 1.